Reading from the N-terminus, the 471-residue chain is uncharacterized protein (471 aa).

Residues 13-57 (KGGATIGATPMESDSSVSALSGSSASKVSRRGRRRSHLASKSSAP) are disordered. The segment covering 27–39 (SSVSALSGSSASK) has biased composition (low complexity). Over residues 40–50 (VSRRGRRRSHL) the composition is skewed to basic residues. 2 consecutive CCHC-type zinc fingers follow at residues 397 to 414 (YACH…ECRQ) and 417 to 434 (SVCR…KCQN). Residues 438 to 457 (CRNCRHRGQPSGHYMLSNAC) form a gag-like cysteine motif region.

The protein to corresponding ORF of B.mori (R1BM).

This is an uncharacterized protein from Drosophila melanogaster (Fruit fly).